The following is a 520-amino-acid chain: 2-isopropylmalate synthase (520 aa).

Positions 12–274 (IRIFDTTLRD…DSAINTPRIV (263 aa)) constitute a Pyruvate carboxyltransferase domain. Positions 21, 209, 211, and 245 each coordinate Mn(2+). The tract at residues 396–520 (RLASMTISDV…VVAGKTAAVA (125 aa)) is regulatory domain.

The protein belongs to the alpha-IPM synthase/homocitrate synthase family. LeuA type 1 subfamily. As to quaternary structure, homodimer. Mn(2+) serves as cofactor.

The protein localises to the cytoplasm. The catalysed reaction is 3-methyl-2-oxobutanoate + acetyl-CoA + H2O = (2S)-2-isopropylmalate + CoA + H(+). Its pathway is amino-acid biosynthesis; L-leucine biosynthesis; L-leucine from 3-methyl-2-oxobutanoate: step 1/4. Its function is as follows. Catalyzes the condensation of the acetyl group of acetyl-CoA with 3-methyl-2-oxobutanoate (2-ketoisovalerate) to form 3-carboxy-3-hydroxy-4-methylpentanoate (2-isopropylmalate). In Xanthomonas euvesicatoria pv. vesicatoria (strain 85-10) (Xanthomonas campestris pv. vesicatoria), this protein is 2-isopropylmalate synthase.